Consider the following 569-residue polypeptide: Proline--tRNA ligase (569 aa).

This sequence belongs to the class-II aminoacyl-tRNA synthetase family. ProS type 1 subfamily. As to quaternary structure, homodimer.

It is found in the cytoplasm. It carries out the reaction tRNA(Pro) + L-proline + ATP = L-prolyl-tRNA(Pro) + AMP + diphosphate. Its function is as follows. Catalyzes the attachment of proline to tRNA(Pro) in a two-step reaction: proline is first activated by ATP to form Pro-AMP and then transferred to the acceptor end of tRNA(Pro). As ProRS can inadvertently accommodate and process non-cognate amino acids such as alanine and cysteine, to avoid such errors it has two additional distinct editing activities against alanine. One activity is designated as 'pretransfer' editing and involves the tRNA(Pro)-independent hydrolysis of activated Ala-AMP. The other activity is designated 'posttransfer' editing and involves deacylation of mischarged Ala-tRNA(Pro). The misacylated Cys-tRNA(Pro) is not edited by ProRS. This is Proline--tRNA ligase from Shewanella loihica (strain ATCC BAA-1088 / PV-4).